The sequence spans 363 residues: NADH-quinone oxidoreductase subunit H (363 aa).

9 helical membrane-spanning segments follow: residues 62–82 (GPMY…KLLF), 96–116 (FVIA…VVPF), 127–147 (VGLL…ILAG), 163–183 (AAQV…VMIA), 202–222 (FFDW…VSGV), 238–257 (EIVA…LFFL), 264–286 (ILVS…QGWV), 299–319 (KGGW…YIWF), and 339–359 (FIPL…YGVI).

It belongs to the complex I subunit 1 family. In terms of assembly, NDH-1 is composed of 14 different subunits. Subunits NuoA, H, J, K, L, M, N constitute the membrane sector of the complex.

It is found in the cell inner membrane. It catalyses the reaction a quinone + NADH + 5 H(+)(in) = a quinol + NAD(+) + 4 H(+)(out). NDH-1 shuttles electrons from NADH, via FMN and iron-sulfur (Fe-S) centers, to quinones in the respiratory chain. The immediate electron acceptor for the enzyme in this species is believed to be ubiquinone. Couples the redox reaction to proton translocation (for every two electrons transferred, four hydrogen ions are translocated across the cytoplasmic membrane), and thus conserves the redox energy in a proton gradient. This subunit may bind ubiquinone. This is NADH-quinone oxidoreductase subunit H from Xanthomonas axonopodis pv. citri (strain 306).